Here is a 312-residue protein sequence, read N- to C-terminus: Acetyl-coenzyme A carboxylase carboxyl transferase subunit beta (312 aa).

Positions 1–52 (MEMDTAVENPAVEKNGQPTPSSTSTATDAAPTPNAPNRPAPNTAGNRKRGVP) are disordered. The segment covering 18-32 (PTPSSTSTATDAAPT) has biased composition (low complexity). Positions 55-312 (VWRKCDSCGA…IATAIDYCGK (258 aa)) constitute a CoA carboxyltransferase N-terminal domain. Zn(2+) contacts are provided by C59, C62, C78, and C81. The C4-type zinc finger occupies 59-81 (CDSCGASLFYKEVQQRLNVCPQC).

The protein belongs to the AccD/PCCB family. Acetyl-CoA carboxylase is a heterohexamer composed of biotin carboxyl carrier protein (AccB), biotin carboxylase (AccC) and two subunits each of ACCase subunit alpha (AccA) and ACCase subunit beta (AccD). Zn(2+) is required as a cofactor.

Its subcellular location is the cytoplasm. The catalysed reaction is N(6)-carboxybiotinyl-L-lysyl-[protein] + acetyl-CoA = N(6)-biotinyl-L-lysyl-[protein] + malonyl-CoA. The protein operates within lipid metabolism; malonyl-CoA biosynthesis; malonyl-CoA from acetyl-CoA: step 1/1. Functionally, component of the acetyl coenzyme A carboxylase (ACC) complex. Biotin carboxylase (BC) catalyzes the carboxylation of biotin on its carrier protein (BCCP) and then the CO(2) group is transferred by the transcarboxylase to acetyl-CoA to form malonyl-CoA. The protein is Acetyl-coenzyme A carboxylase carboxyl transferase subunit beta of Rhodopirellula baltica (strain DSM 10527 / NCIMB 13988 / SH1).